The following is a 142-amino-acid chain: MAKKITAFIKLQVKAGQANPAPPVGPALGQRGLNIMEFCKAFNAATSKLEPGLPTPVIITAYSDRTFTFVTKSTPASVLLKKAAGVSSGSKRPNTDKVGKVTRKQLEEIAKVKEADLTAAELEAAVRTIAGSARSMGLTVEG.

The protein belongs to the universal ribosomal protein uL11 family. Part of the ribosomal stalk of the 50S ribosomal subunit. Interacts with L10 and the large rRNA to form the base of the stalk. L10 forms an elongated spine to which L12 dimers bind in a sequential fashion forming a multimeric L10(L12)X complex. One or more lysine residues are methylated.

In terms of biological role, forms part of the ribosomal stalk which helps the ribosome interact with GTP-bound translation factors. The protein is Large ribosomal subunit protein uL11 of Xanthomonas axonopodis pv. citri (strain 306).